The primary structure comprises 123 residues: uncharacterized protein (123 aa).

2 consecutive transmembrane segments (helical) span residues 1-21 (MVLP…AVGC) and 103-123 (LESS…ILLF).

It is found in the membrane. This is an uncharacterized protein from Saccharomyces cerevisiae (strain ATCC 204508 / S288c) (Baker's yeast).